The following is a 549-amino-acid chain: Frizzled-7-A (549 aa).

The N-terminal stretch at 1–22 (MSSTVSLLFCCLFLQLCPSAQQ) is a signal peptide. Topologically, residues 23–231 (YHGEKGISVP…EEEVRFARLW (209 aa)) are extracellular. Residues 32-151 (PDHGFCQPIS…HGAGEICVGQ (120 aa)) form the FZ domain. 5 cysteine pairs are disulfide-bonded: Cys37/Cys98, Cys45/Cys91, Cys82/Cys119, Cys108/Cys148, and Cys112/Cys136. N-linked (GlcNAc...) asparagine glycosylation occurs at Asn51. N-linked (GlcNAc...) asparagine glycosylation occurs at Asn152. A helical transmembrane segment spans residues 232–252 (VGIWAILCCISTLFTVLTYLV). Residues 253–263 (DMRRFSYPERP) lie on the Cytoplasmic side of the membrane. A helical transmembrane segment spans residues 264 to 284 (IIFLSGCYFMVAVAYTAGFLL). Over 285-311 (EERAVCVERFSEDSYRTVAQGTKKEGC) the chain is Extracellular. A helical transmembrane segment spans residues 312-332 (TILFMILYFFGMASSIWWVIL). Topologically, residues 333 to 354 (SLTWFLSAGMKWGHEAIEANSQ) are cytoplasmic. Residues 355–375 (YFHLAAWAVPAVKTITILAMG) traverse the membrane as a helical segment. Topologically, residues 376–398 (QVDGDVLSGVCYVGINSVDSLRG) are extracellular. Residues 399-419 (FVLAPLFVYLFIGTSFLLAGF) form a helical membrane-spanning segment. Residues 420-445 (VSLFRIRTIMKHDGTKTEKLEKLMVR) are Cytoplasmic-facing. Residues 446–466 (IGVFSVMYTVPATIVLACYFY) form a helical membrane-spanning segment. The Extracellular portion of the chain corresponds to 467–503 (EQAFRDTWEKTWLVQTCKGYAVPCPNYNFAPMSPDFT). The chain crosses the membrane as a helical span at residues 504–524 (VFMIKYLMTMIVGITSSFWIW). At 525 to 549 (SGKTLQSWRRFYHRLSNGSKGETAV) the chain is on the cytoplasmic side. A Lys-Thr-X-X-X-Trp motif, mediates interaction with the PDZ domain of Dvl family members motif is present at residues 527 to 532 (KTLQSW). Positions 547–549 (TAV) match the PDZ-binding motif.

The protein belongs to the G-protein coupled receptor Fz/Smo family. In terms of assembly, interacts with wnt11 and sdc4. The extracellular domain interacts with the extracellular domain of pcdh8/papc. Expressed in the animal region of cleavage stage embryos. During gastrulation, broadly expressed on the dorsal side of the embryo in deep mesodermal cells surrounding the blastopore lip and in presumptive anterior neuroectoderm. During neurulation, becomes progressively more restricted to the dorsal epidermis, neural plate, and neural tube. Expressed in the cranial neural crest of neurulae and tailbud embryos as well as the pronephros of tailbud embryos. Localized to the brain of neurulae, tailbud embryos and tadpoles. In tadpoles, strongly expressed in the eye and developing heart.

It is found in the cell membrane. The protein localises to the endosome membrane. Receptor for Wnt proteins. Acts in both canonical and non-canonical Wnt pathways. Although different papers report differing Wnt preferences, wnt5a, wnt8b and wnt11 have been proposed as synergists. In the canonical Wnt pathway, acts via beta-catenin to promote the expression of the dorsal genes siamois, twin and nodal3 and to establish the dorsal axis of the embryo and induce dorsal mesoderm formation. In a non-canonical Wnt/planar cell polarity (PCP) pathway, acts with sdc4 and dvl2/dsh to regulate convergent extension cell movements during gastrulation. Triggers phosphorylation of dvl2/dsh and its translocation to the plasma membrane. In a third branch of Wnt signaling, acts in a non-canonical pathway via trimeric G proteins, and independently of dvl2/dsh, to recruit protein kinase C (PKC) to the membrane and thus activate PKC. PKC signaling controls cell sorting and tissue separation during gastrulation. The sequence is that of Frizzled-7-A (fzd7-a) from Xenopus laevis (African clawed frog).